The chain runs to 213 residues: Bacteriochlorophyll synthase 23 kDa chain (213 aa).

It participates in porphyrin-containing compound metabolism; bacteriochlorophyll biosynthesis (light-independent). This chain is Bacteriochlorophyll synthase 23 kDa chain (bchJ), found in Rhodobacter capsulatus (strain ATCC BAA-309 / NBRC 16581 / SB1003).